The primary structure comprises 312 residues: tRNA dimethylallyltransferase (312 aa).

11-18 (GPTAAGKS) contacts ATP. 13–18 (TAAGKS) contacts substrate. Interaction with substrate tRNA stretches follow at residues 36–39 (DSAT), 160–164 (QRIQR), and 243–248 (RCVGYR).

The protein belongs to the IPP transferase family. As to quaternary structure, monomer. Mg(2+) is required as a cofactor.

The enzyme catalyses adenosine(37) in tRNA + dimethylallyl diphosphate = N(6)-dimethylallyladenosine(37) in tRNA + diphosphate. Catalyzes the transfer of a dimethylallyl group onto the adenine at position 37 in tRNAs that read codons beginning with uridine, leading to the formation of N6-(dimethylallyl)adenosine (i(6)A). The protein is tRNA dimethylallyltransferase of Bordetella avium (strain 197N).